A 449-amino-acid polypeptide reads, in one-letter code: Tubulin alpha chain (449 aa).

Glutamine 11 contributes to the GTP binding site. Residue lysine 40 is modified to N6-acetyllysine. GTP is bound by residues glutamate 71, serine 140, glycine 144, threonine 145, threonine 179, asparagine 206, and asparagine 228. Glutamate 71 contributes to the Mg(2+) binding site. Glutamate 254 is an active-site residue.

The protein belongs to the tubulin family. Dimer of alpha and beta chains. A typical microtubule is a hollow water-filled tube with an outer diameter of 25 nm and an inner diameter of 15 nM. Alpha-beta heterodimers associate head-to-tail to form protofilaments running lengthwise along the microtubule wall with the beta-tubulin subunit facing the microtubule plus end conferring a structural polarity. Microtubules usually have 13 protofilaments but different protofilament numbers can be found in some organisms and specialized cells. Mg(2+) is required as a cofactor. In terms of processing, undergoes a tyrosination/detyrosination cycle, the cyclic removal and re-addition of a C-terminal tyrosine residue by the enzymes tubulin tyrosine carboxypeptidase (TTCP) and tubulin tyrosine ligase (TTL), respectively. Some glutamate residues at the C-terminus are either polyglutamylated or polyglycylated. These 2 modifications occur exclusively on glutamate residues and result in either polyglutamate or polyglycine chains on the gamma-carboxyl group. Both modifications can coexist on the same protein on adjacent residues, and lowering polyglycylation levels increases polyglutamylation, and reciprocally. The precise function of such modifications is still unclear but they regulate the assembly and dynamics of axonemal microtubules. Post-translationally, acetylation of alpha chains at Lys-40 stabilizes microtubules and affects affinity and processivity of microtubule motors. This modification has a role in multiple cellular functions, ranging from cell motility, cell cycle progression or cell differentiation to intracellular trafficking and signaling.

It localises to the cytoplasm. The protein localises to the cytoskeleton. It carries out the reaction GTP + H2O = GDP + phosphate + H(+). In terms of biological role, tubulin is the major constituent of microtubules, a cylinder consisting of laterally associated linear protofilaments composed of alpha- and beta-tubulin heterodimers. Microtubules grow by the addition of GTP-tubulin dimers to the microtubule end, where a stabilizing cap forms. Below the cap, tubulin dimers are in GDP-bound state, owing to GTPase activity of alpha-tubulin. The polypeptide is Tubulin alpha chain (Tetrahymena thermophila).